Here is a 21-residue protein sequence, read N- to C-terminus: DYE-linked aldehyde dehydrogenase, gamma chain (21 aa).

As to quaternary structure, heterotetramer composed of an alpha, a beta and two gamma chains. The cofactor is [2Fe-2S] cluster.

In terms of biological role, active with aldehydes and formate esters as substrates. The sequence is that of DYE-linked aldehyde dehydrogenase, gamma chain from Amycolatopsis methanolica.